Here is a 668-residue protein sequence, read N- to C-terminus: Threonine--tRNA ligase (668 aa).

Positions 1–64 (MSQSVSLTFP…TDGKIEIITR (64 aa)) constitute a TGS domain. Residues 245 to 553 (DHRKLGREMD…LIENFAGHMP (309 aa)) form a catalytic region. Residues cysteine 347, histidine 398, and histidine 530 each contribute to the Zn(2+) site.

It belongs to the class-II aminoacyl-tRNA synthetase family. In terms of assembly, homodimer. The cofactor is Zn(2+).

The protein resides in the cytoplasm. The enzyme catalyses tRNA(Thr) + L-threonine + ATP = L-threonyl-tRNA(Thr) + AMP + diphosphate + H(+). Functionally, catalyzes the attachment of threonine to tRNA(Thr) in a two-step reaction: L-threonine is first activated by ATP to form Thr-AMP and then transferred to the acceptor end of tRNA(Thr). Also edits incorrectly charged L-seryl-tRNA(Thr). This Rhizobium etli (strain ATCC 51251 / DSM 11541 / JCM 21823 / NBRC 15573 / CFN 42) protein is Threonine--tRNA ligase.